The following is a 369-amino-acid chain: Leucine-specific-binding protein (369 aa).

The N-terminal stretch at 1–23 is a signal peptide; sequence MKRKAKTIIAGIVALAVSQGAMA. A disulfide bond links Cys76 and Cys101.

Belongs to the leucine-binding protein family.

Its subcellular location is the periplasm. In terms of biological role, this protein is a component of the leucine-specific transport system, which is one of the two periplasmic binding protein-dependent transport systems of the high-affinity transport of the branched-chain amino acids. This is Leucine-specific-binding protein (livK) from Salmonella typhi.